The sequence spans 371 residues: Putative glutamate--cysteine ligase 2 (371 aa).

Belongs to the glutamate--cysteine ligase type 2 family. YbdK subfamily.

It catalyses the reaction L-cysteine + L-glutamate + ATP = gamma-L-glutamyl-L-cysteine + ADP + phosphate + H(+). Functionally, ATP-dependent carboxylate-amine ligase which exhibits weak glutamate--cysteine ligase activity. This is Putative glutamate--cysteine ligase 2 from Cupriavidus pinatubonensis (strain JMP 134 / LMG 1197) (Cupriavidus necator (strain JMP 134)).